The following is a 343-amino-acid chain: Holliday junction branch migration complex subunit RuvB (343 aa).

Residues 1–186 are large ATPase domain (RuvB-L); sequence MVMARKSDTL…FQIQERLEYY (186 aa). ATP contacts are provided by residues leucine 25, arginine 26, glycine 67, lysine 70, threonine 71, serine 72, 133-135, arginine 176, tyrosine 186, and arginine 223; that span reads EDF. Threonine 71 contacts Mg(2+). A small ATPAse domain (RuvB-S) region spans residues 187–257; that stretch reads DAKALESILH…LAQKSLDRLG (71 aa). Residues 260–343 form a head domain (RuvB-H) region; sequence ASGLDSMDRK…PPPTPQGSLF (84 aa). DNA contacts are provided by arginine 296, arginine 315, and arginine 320.

Belongs to the RuvB family. As to quaternary structure, homohexamer. Forms an RuvA(8)-RuvB(12)-Holliday junction (HJ) complex. HJ DNA is sandwiched between 2 RuvA tetramers; dsDNA enters through RuvA and exits via RuvB. An RuvB hexamer assembles on each DNA strand where it exits the tetramer. Each RuvB hexamer is contacted by two RuvA subunits (via domain III) on 2 adjacent RuvB subunits; this complex drives branch migration. In the full resolvosome a probable DNA-RuvA(4)-RuvB(12)-RuvC(2) complex forms which resolves the HJ.

The protein resides in the cytoplasm. It carries out the reaction ATP + H2O = ADP + phosphate + H(+). Functionally, the RuvA-RuvB-RuvC complex processes Holliday junction (HJ) DNA during genetic recombination and DNA repair, while the RuvA-RuvB complex plays an important role in the rescue of blocked DNA replication forks via replication fork reversal (RFR). RuvA specifically binds to HJ cruciform DNA, conferring on it an open structure. The RuvB hexamer acts as an ATP-dependent pump, pulling dsDNA into and through the RuvAB complex. RuvB forms 2 homohexamers on either side of HJ DNA bound by 1 or 2 RuvA tetramers; 4 subunits per hexamer contact DNA at a time. Coordinated motions by a converter formed by DNA-disengaged RuvB subunits stimulates ATP hydrolysis and nucleotide exchange. Immobilization of the converter enables RuvB to convert the ATP-contained energy into a lever motion, pulling 2 nucleotides of DNA out of the RuvA tetramer per ATP hydrolyzed, thus driving DNA branch migration. The RuvB motors rotate together with the DNA substrate, which together with the progressing nucleotide cycle form the mechanistic basis for DNA recombination by continuous HJ branch migration. Branch migration allows RuvC to scan DNA until it finds its consensus sequence, where it cleaves and resolves cruciform DNA. The sequence is that of Holliday junction branch migration complex subunit RuvB from Myxococcus xanthus (strain DK1622).